Here is a 156-residue protein sequence, read N- to C-terminus: SPbeta prophage-derived uncharacterized protein YosH (156 aa).

This Bacillus subtilis (strain 168) protein is SPbeta prophage-derived uncharacterized protein YosH (yosH).